We begin with the raw amino-acid sequence, 1998 residues long: Receptor-type tyrosine-protein phosphatase beta (1998 aa).

Residues methionine 1 to alanine 22 form the signal peptide. 17 Fibronectin type-III domains span residues glutamate 23–threonine 109, proline 113–proline 206, valine 207–methionine 291, glutamate 292–leucine 384, proline 378–threonine 466, alanine 470–alanine 556, glutamine 557–threonine 642, valine 643–aspartate 733, lysine 734–glutamate 821, proline 822–asparagine 913, proline 908–threonine 994, valine 995–alanine 1088, proline 1086–valine 1173, alanine 1176–serine 1263, proline 1264–aspartate 1357, lysine 1358–proline 1449, and proline 1449–alanine 1551. Residues glutamate 23–glutamate 1622 are Extracellular-facing. N-linked (GlcNAc...) asparagine glycans are attached at residues asparagine 28, asparagine 53, asparagine 75, asparagine 173, asparagine 199, and asparagine 268. N-linked (GlcNAc...) asparagine glycosylation is found at asparagine 415, asparagine 422, asparagine 480, asparagine 575, asparagine 599, and asparagine 653. Asparagine 830 carries N-linked (GlcNAc...) asparagine glycosylation. N-linked (GlcNAc...) asparagine glycosylation is found at asparagine 1041, asparagine 1097, asparagine 1164, asparagine 1186, asparagine 1213, asparagine 1275, asparagine 1368, asparagine 1471, asparagine 1475, and asparagine 1519. The helical transmembrane segment at glycine 1623–cysteine 1643 threads the bilayer. Residues arginine 1644–arginine 1997 are Cytoplasmic-facing. A Tyrosine-protein phosphatase domain is found at leucine 1704–valine 1964. Substrate contacts are provided by residues aspartate 1871, cysteine 1905–arginine 1911, and glutamine 1949. Residue cysteine 1905 is the Phosphocysteine intermediate of the active site. Tyrosine 1982 is subject to Phosphotyrosine.

The protein belongs to the protein-tyrosine phosphatase family. Receptor class 3 subfamily. Monomer. Interacts with TEK. Interacts via fibronectin type-III 17 domain with CDH5. Detected in a complex with CNTN1 and NRCAM. Interacts (phosphorylated form) with FYN and GRB2. Interacts with IGFBP2. In terms of tissue distribution, expression is very high in the vasculature of lung, spleen, and kidney, as well as in the heart valves, and is also present in the endothelium of arterioles and venules. Also expressed in tumor vasculature.

It is found in the membrane. It catalyses the reaction O-phospho-L-tyrosyl-[protein] + H2O = L-tyrosyl-[protein] + phosphate. In terms of biological role, plays an important role in blood vessel remodeling and angiogenesis. Not necessary for the initial formation of blood vessels, but is essential for their maintenance and remodeling. Can induce dephosphorylation of TEK/TIE2, CDH5/VE-cadherin and KDR/VEGFR-2. Regulates angiopoietin-TIE2 signaling in endothelial cells. Acts as a negative regulator of TIE2, and controls TIE2 driven endothelial cell proliferation, which in turn affects blood vessel remodeling during embryonic development and determines blood vessel size during perinatal growth. Essential for the maintenance of endothelial cell contact integrity and for the adhesive function of VE-cadherin in endothelial cells and this requires the presence of plakoglobin. This Mus musculus (Mouse) protein is Receptor-type tyrosine-protein phosphatase beta (Ptprb).